The chain runs to 85 residues: RNA-binding protein Hfq (85 aa).

The Sm domain maps to 11–71; the sequence is DTFLNHVRKS…ISTIMPGHPV (61 aa).

The protein belongs to the Hfq family. In terms of assembly, homohexamer.

RNA chaperone that binds small regulatory RNA (sRNAs) and mRNAs to facilitate mRNA translational regulation in response to envelope stress, environmental stress and changes in metabolite concentrations. Also binds with high specificity to tRNAs. Seems to be involved in the regulation of NifA. This Azorhizobium caulinodans (strain ATCC 43989 / DSM 5975 / JCM 20966 / LMG 6465 / NBRC 14845 / NCIMB 13405 / ORS 571) protein is RNA-binding protein Hfq.